The sequence spans 200 residues: Putative NAD(P)H nitroreductase Spy0809 (200 aa).

The cofactor is FMN.

The sequence is that of Putative NAD(P)H nitroreductase Spy0809 from Streptococcus pyogenes serotype M6 (strain ATCC BAA-946 / MGAS10394).